The primary structure comprises 529 residues: Peptide chain release factor 3 (529 aa).

The tr-type G domain maps to 11-280 (AKRRTFAIIS…GLVEWAPAPM (270 aa)). Residues 20 to 27 (SHPDAGKT), 88 to 92 (DTPGH), and 142 to 145 (NKLD) contribute to the GTP site.

This sequence belongs to the TRAFAC class translation factor GTPase superfamily. Classic translation factor GTPase family. PrfC subfamily.

It localises to the cytoplasm. In terms of biological role, increases the formation of ribosomal termination complexes and stimulates activities of RF-1 and RF-2. It binds guanine nucleotides and has strong preference for UGA stop codons. It may interact directly with the ribosome. The stimulation of RF-1 and RF-2 is significantly reduced by GTP and GDP, but not by GMP. The protein is Peptide chain release factor 3 of Salmonella arizonae (strain ATCC BAA-731 / CDC346-86 / RSK2980).